We begin with the raw amino-acid sequence, 612 residues long: Arginine--tRNA ligase (612 aa).

Residues 152–162 (PNIAKEMHVGH) carry the 'HIGH' region motif.

It belongs to the class-I aminoacyl-tRNA synthetase family. In terms of assembly, monomer.

The protein resides in the cytoplasm. The enzyme catalyses tRNA(Arg) + L-arginine + ATP = L-arginyl-tRNA(Arg) + AMP + diphosphate. This Prochlorococcus marinus (strain MIT 9313) protein is Arginine--tRNA ligase.